We begin with the raw amino-acid sequence, 544 residues long: MAKDIKFSEDARRSMLRGVDKLADAVKVTLGPKGRNVVLEKKFGSPLITNDGVTIAKEIELEDAFENMGAKLVAEVASKTNDIAGDGTTTATVLAQAMIREGLKNVTSGANPMVIRKGIEKATQVAVEELSKISKPIEGKDSIAQVAAISSADDEVGKIIAEAMERVGNDGVITIEESKGFSTELEVVEGMQFDRGYASPYMVTDSDKMEAVLDNPYVLITDKKISNIQEVLPVLEQVVQQGKPILIIAEDVEGEALATLVVNKLRGTFNAVAVKAPGFGDRRKAMLEDIAILTGGEVITEDLGLDLKSANITQLGRASKVVVTKENTTIVEGAGESDKIAARVNQIKAQIEETTSDFDKEKLQERLAKLAGGVAVLKVGAATETEMKERKLRIEDALNSTRAAVEEGIVAGGGTALVNVIKAVSSIGAEGDEATGVNIVLRALEEPVRQIAHNAGLEGSVIVERLKKEEAGFGFNAATGEWVNMVEAGIVDPTKVTRSALQHAASVSAMFLTTEAVIADKPEENEGGGGMPDMGGMGGMGGMM.

ATP-binding positions include 29–32 (TLGP), 86–90 (DGTTT), Gly413, 476–478 (NAA), and Asp492.

The protein belongs to the chaperonin (HSP60) family. In terms of assembly, forms a cylinder of 14 subunits composed of two heptameric rings stacked back-to-back. Interacts with the co-chaperonin GroES.

The protein resides in the cytoplasm. It carries out the reaction ATP + H2O + a folded polypeptide = ADP + phosphate + an unfolded polypeptide.. Its function is as follows. Together with its co-chaperonin GroES, plays an essential role in assisting protein folding. The GroEL-GroES system forms a nano-cage that allows encapsulation of the non-native substrate proteins and provides a physical environment optimized to promote and accelerate protein folding. In Halalkalibacterium halodurans (strain ATCC BAA-125 / DSM 18197 / FERM 7344 / JCM 9153 / C-125) (Bacillus halodurans), this protein is Chaperonin GroEL.